Consider the following 90-residue polypeptide: MVKTPLISVISQEEKEKNRGSVEFQVLCFTKKIDQISSHLKLHRKDYLSQRGLHKILGKRQRLLSYLSKKNRVRYKELINRLNIRESKTR.

It belongs to the universal ribosomal protein uS15 family. Part of the 30S ribosomal subunit.

Its subcellular location is the plastid. The protein localises to the chloroplast. In Pelargonium hortorum (Common geranium), this protein is Small ribosomal subunit protein uS15c (rps15-A).